The following is a 355-amino-acid chain: Protein ATP1B4 (355 aa).

Residues 1–108 (MRRQLRSRRA…SLARTGQSWS (108 aa)) are Nuclear-facing. A disordered region spans residues 33–77 (ADEEEEAEEEARVMVVPDLEEEEEEEEEKEEEEKEEEDSHSQETD). The span at 50–68 (DLEEEEEEEEEKEEEEKEE) shows a compositional bias: acidic residues. The helical; Signal-anchor for type II membrane protein transmembrane segment at 109–129 (LILVIYFFFYASLAAVITLCM) threads the bilayer. Over 130–355 (YTLFLTISPY…RVIFTLNIET (226 aa)) the chain is Perinuclear space.

It belongs to the X(+)/potassium ATPases subunit beta family. As to quaternary structure, associates with a SMAD7-transcriptional complex. Interacts with SNW1 and TOR1AIP1. Does not associate with known Na,K-ATPase alpha-subunits.

The protein localises to the nucleus inner membrane. In terms of biological role, may act as a transcriptional coregulator during muscle development through its interaction with SNW1. Has lost its ancestral function as a Na,K-ATPase beta-subunit. This is Protein ATP1B4 (ATP1B4) from Bos taurus (Bovine).